The primary structure comprises 335 residues: Beta-ketoacyl-[acyl-carrier-protein] synthase III (335 aa).

Active-site residues include C119 and H261. Residues Q262–R266 form an ACP-binding region. The active site involves N291.

This sequence belongs to the thiolase-like superfamily. FabH family. In terms of assembly, homodimer.

It is found in the cytoplasm. It catalyses the reaction malonyl-[ACP] + acetyl-CoA + H(+) = 3-oxobutanoyl-[ACP] + CO2 + CoA. It participates in lipid metabolism; fatty acid biosynthesis. Functionally, catalyzes the condensation reaction of fatty acid synthesis by the addition to an acyl acceptor of two carbons from malonyl-ACP. Catalyzes the first condensation reaction which initiates fatty acid synthesis and may therefore play a role in governing the total rate of fatty acid production. Possesses both acetoacetyl-ACP synthase and acetyl transacylase activities. Its substrate specificity determines the biosynthesis of branched-chain and/or straight-chain of fatty acids. This chain is Beta-ketoacyl-[acyl-carrier-protein] synthase III, found in Prochlorococcus marinus (strain MIT 9215).